Here is a 316-residue protein sequence, read N- to C-terminus: Small ribosomal subunit biogenesis GTPase RsgA (316 aa).

The 166-residue stretch at 83–248 (DQYKSKLFAA…LIDSPGFQEF (166 aa)) folds into the CP-type G domain. GTP contacts are provided by residues 131–134 (NKTD) and 185–193 (GQSGMGKST). The Zn(2+) site is built by Cys272, Cys277, His279, and Cys285.

This sequence belongs to the TRAFAC class YlqF/YawG GTPase family. RsgA subfamily. In terms of assembly, monomer. Associates with 30S ribosomal subunit, binds 16S rRNA. It depends on Zn(2+) as a cofactor.

The protein localises to the cytoplasm. In terms of biological role, one of several proteins that assist in the late maturation steps of the functional core of the 30S ribosomal subunit. Helps release RbfA from mature subunits. May play a role in the assembly of ribosomal proteins into the subunit. Circularly permuted GTPase that catalyzes slow GTP hydrolysis, GTPase activity is stimulated by the 30S ribosomal subunit. The sequence is that of Small ribosomal subunit biogenesis GTPase RsgA from Paraburkholderia xenovorans (strain LB400).